A 610-amino-acid chain; its full sequence is Chaperone protein DnaK (610 aa).

Threonine 173 is subject to Phosphothreonine; by autocatalysis. Disordered regions lie at residues 525-544 and 576-610; these read ENIG…ALKT and AAQQ…DDKK. Residues 529–542 are compositionally biased toward basic and acidic residues; the sequence is EEDKKSAEEKKDAL. Over residues 576-592 the composition is skewed to low complexity; that stretch reads AAQQQQQAQGANAGQNN. Positions 599–610 are enriched in basic and acidic residues; sequence AEFKEVKDDDKK.

It belongs to the heat shock protein 70 family.

Functionally, acts as a chaperone. In Staphylococcus aureus (strain Mu3 / ATCC 700698), this protein is Chaperone protein DnaK.